The sequence spans 469 residues: Glutamate--tRNA ligase (469 aa).

The 'HIGH' region signature appears at 9-19; that stretch reads PSPTGYLHVGG. Zn(2+) contacts are provided by C98, C100, C125, and D127. Positions 237–241 match the 'KMSKS' region motif; it reads KLSKR. An ATP-binding site is contributed by K240.

The protein belongs to the class-I aminoacyl-tRNA synthetase family. Glutamate--tRNA ligase type 1 subfamily. In terms of assembly, monomer. Zn(2+) is required as a cofactor.

It localises to the cytoplasm. The catalysed reaction is tRNA(Glu) + L-glutamate + ATP = L-glutamyl-tRNA(Glu) + AMP + diphosphate. Functionally, catalyzes the attachment of glutamate to tRNA(Glu) in a two-step reaction: glutamate is first activated by ATP to form Glu-AMP and then transferred to the acceptor end of tRNA(Glu). The protein is Glutamate--tRNA ligase of Erwinia tasmaniensis (strain DSM 17950 / CFBP 7177 / CIP 109463 / NCPPB 4357 / Et1/99).